Reading from the N-terminus, the 222-residue chain is Exosome complex component Rrp4 (222 aa).

Residues 63-131 enclose the S1 motif domain; sequence NDSVIGKVVD…EVKKVKLGLH (69 aa). The 62-residue stretch at 139-200 folds into the KH domain; sequence EGGTLAYITP…EIVKRALEMI (62 aa).

It belongs to the RRP4 family. In terms of assembly, component of the archaeal exosome complex. Forms a trimer of Rrp4 and/or Csl4 subunits. The trimer associates with a hexameric ring-like arrangement composed of 3 Rrp41-Rrp42 heterodimers.

The protein localises to the cytoplasm. Its function is as follows. Non-catalytic component of the exosome, which is a complex involved in RNA degradation. Increases the RNA binding and the efficiency of RNA degradation. Confers strong poly(A) specificity to the exosome. The chain is Exosome complex component Rrp4 from Methanothermus fervidus (strain ATCC 43054 / DSM 2088 / JCM 10308 / V24 S).